The chain runs to 127 residues: Large ribosomal subunit protein bL19 (127 aa).

The protein belongs to the bacterial ribosomal protein bL19 family.

In terms of biological role, this protein is located at the 30S-50S ribosomal subunit interface and may play a role in the structure and function of the aminoacyl-tRNA binding site. This Jannaschia sp. (strain CCS1) protein is Large ribosomal subunit protein bL19.